Consider the following 982-residue polypeptide: Zinc finger and BTB domain-containing protein 4 (982 aa).

Positions 30-131 (CDVTLIAGDT…IYSARLALPG (102 aa)) constitute a BTB domain. Residue K40 forms a Glycyl lysine isopeptide (Lys-Gly) (interchain with G-Cter in SUMO2) linkage. A disordered region spans residues 71–103 (TGGSAPSPATTTAASSSSSSPPPASPHSSSPPR). The span at 74-89 (SAPSPATTTAASSSSS) shows a compositional bias: low complexity. Residues 165-324 (VPPAPTSMVT…CRYCEKVFAL (160 aa)) form an interaction with CBFA2T3 region. A C2H2-type 1; atypical zinc finger spans residues 210–232 (FPCPRCGKSFIHPKRLQTHEAQC). Residues 234–255 (RGSNTRGSAGLGPGVSGSGGPA) form a disordered region. Gly residues predominate over residues 242–255 (AGLGPGVSGSGGPA). 3 C2H2-type zinc fingers span residues 285–307 (YVCA…SNVH), 313–335 (YPCR…EVWH), and 341–364 (YQCI…RAFH). A Phosphoserine modification is found at S367. The disordered stretch occupies residues 404-578 (KTYSQGAPEA…QLQAPPPLCQ (175 aa)). Pro residues predominate over residues 430–446 (SPQPLPPPAPEPGPPPS). Gly residues predominate over residues 467–477 (AAGGGPAGTGG). Composition is skewed to low complexity over residues 478-488 (SQAASVITYTT) and 507-529 (ATPT…ATAT). K548 is covalently cross-linked (Glycyl lysine isopeptide (Lys-Gly) (interchain with G-Cter in SUMO2)). Over residues 552–565 (GLSGSGGSPTGTGR) the composition is skewed to gly residues. K590 participates in a covalent cross-link: Glycyl lysine isopeptide (Lys-Gly) (interchain with G-Cter in SUMO2). A compositionally biased stretch (basic and acidic residues) spans 591–600 (RRISETDLRP). Disordered regions lie at residues 591–700 (RRIS…ERRH), 715–738 (LRKH…SSTR), 759–839 (QRHA…GGGS), and 854–880 (GGSR…GDRM). A compositionally biased stretch (acidic residues) spans 604 to 627 (SGEEVEESEEEEEEEEEEDQEEQE). Residues 628–637 (ESKAGGEDQL) show a composition bias toward basic and acidic residues. C2H2-type zinc fingers lie at residues 700–722 (HRCG…QEAH) and 739–761 (FTCP…GQRH). T769 and T771 each carry phosphothreonine; by HIPK2. Over residues 799–820 (SSSSGEAGSGSAAAAEASESAS) the composition is skewed to low complexity. T953 is subject to Phosphothreonine; by HIPK2.

As to quaternary structure, interacts with HIPK2. Interacts with CBFA2T3. Interacts with ZBTB38. In terms of processing, phosphorylated by HIPK2. This phosphorylation reduces stability and triggers ZBTB4 protein degradation in response to DNA damage. As to expression, expressed in adult and aged myogenic satellite cells.

The protein resides in the nucleus. The protein localises to the chromosome. Transcriptional repressor with bimodal DNA-binding specificity. Represses transcription in a methyl-CpG-dependent manner. Binds with a higher affinity to methylated CpG dinucleotides in the consensus sequence 5'-CGCG-3' but can also bind to the non-methylated consensus sequence 5'-CTGCNA-3' also known as the consensus kaiso binding site (KBS). Can also bind specifically to a single methyl-CpG pair and can bind hemimethylated DNA but with a lower affinity compared to methylated DNA. Plays a role in postnatal myogenesis, may be involved in the regulation of satellite cells self-renewal. This Mus musculus (Mouse) protein is Zinc finger and BTB domain-containing protein 4 (Zbtb4).